Consider the following 262-residue polypeptide: Ribosome biogenesis GTPase A (262 aa).

In terms of domain architecture, CP-type G spans 12 to 157 (KRQIKDLLRL…ILDTPGILYK (146 aa)). GTP-binding positions include 54-57 (NKVD), 109-114 (NTGKST), and Gly-153.

It belongs to the TRAFAC class YlqF/YawG GTPase family. MTG1 subfamily.

Its subcellular location is the cytoplasm. Required for a late step of 50S ribosomal subunit assembly. Has GTPase activity. Binds to the 23S rRNA. The chain is Ribosome biogenesis GTPase A from Thermotoga maritima (strain ATCC 43589 / DSM 3109 / JCM 10099 / NBRC 100826 / MSB8).